A 578-amino-acid chain; its full sequence is Proteasome-associated ATPase (578 aa).

Positions 35–84 (RHLTALEEQLGAARTRLAQVSAQNDRLATTLREARDQIVALKAEVDRLGQ) form a coiled coil. 266-271 (GCGKTL) is an ATP binding site. Residues 577–578 (YL) form a docks into pockets in the proteasome alpha-ring region.

It belongs to the AAA ATPase family. As to quaternary structure, homohexamer. Assembles into a hexameric ring structure that caps the 20S proteasome core. Strongly interacts with the prokaryotic ubiquitin-like protein Pup through a hydrophobic interface; the interacting region of ARC lies in its N-terminal coiled-coil domain. There is one Pup binding site per ARC hexamer ring. Upon ATP-binding, the C-terminus of ARC interacts with the alpha-rings of the proteasome core, possibly by binding to the intersubunit pockets.

Its pathway is protein degradation; proteasomal Pup-dependent pathway. Functionally, ATPase which is responsible for recognizing, binding, unfolding and translocation of pupylated proteins into the bacterial 20S proteasome core particle. May be essential for opening the gate of the 20S proteasome via an interaction with its C-terminus, thereby allowing substrate entry and access to the site of proteolysis. Thus, the C-termini of the proteasomal ATPase may function like a 'key in a lock' to induce gate opening and therefore regulate proteolysis. This chain is Proteasome-associated ATPase, found in Kineococcus radiotolerans (strain ATCC BAA-149 / DSM 14245 / SRS30216).